Here is a 677-residue protein sequence, read N- to C-terminus: DNA-directed RNA polymerase subunit beta' (677 aa).

Zn(2+)-binding residues include Cys69, Cys71, Cys87, and Cys90. Positions 489, 491, and 493 each coordinate Mg(2+).

The protein belongs to the RNA polymerase beta' chain family. RpoC1 subfamily. As to quaternary structure, in plastids the minimal PEP RNA polymerase catalytic core is composed of four subunits: alpha, beta, beta', and beta''. When a (nuclear-encoded) sigma factor is associated with the core the holoenzyme is formed, which can initiate transcription. Mg(2+) serves as cofactor. Requires Zn(2+) as cofactor.

It is found in the plastid. Its subcellular location is the chloroplast. The catalysed reaction is RNA(n) + a ribonucleoside 5'-triphosphate = RNA(n+1) + diphosphate. DNA-dependent RNA polymerase catalyzes the transcription of DNA into RNA using the four ribonucleoside triphosphates as substrates. In Spinacia oleracea (Spinach), this protein is DNA-directed RNA polymerase subunit beta'.